A 185-amino-acid chain; its full sequence is Lactoylglutathione lyase (185 aa).

A disordered region spans residues 1–21 (MASEAKESPANNPGLSTVRDE). The 148-residue stretch at 27–174 (IMQQTMFRVK…DGYWIEIFDL (148 aa)) folds into the VOC domain. Substrate contacts are provided by Gln-30 and Arg-34. Gln-30 lines the Zn(2+) pocket. Glu-96 provides a ligand contact to Zn(2+). Residues Asn-100, Arg-120, His-124, and 154 to 155 (KM) contribute to the substrate site. His-124 is a Zn(2+) binding site. Glu-170 serves as a coordination point for Zn(2+). Glu-170 functions as the Proton donor/acceptor in the catalytic mechanism.

This sequence belongs to the glyoxalase I family. The cofactor is Zn(2+).

The catalysed reaction is (R)-S-lactoylglutathione = methylglyoxal + glutathione. The protein operates within secondary metabolite metabolism; methylglyoxal degradation; (R)-lactate from methylglyoxal: step 1/2. Its function is as follows. Catalyzes the conversion of hemimercaptal, formed from methylglyoxal and glutathione, to S-lactoylglutathione. This chain is Lactoylglutathione lyase (GLY I), found in Brassica juncea (Indian mustard).